A 33-amino-acid polypeptide reads, in one-letter code: ATP synthase 27 kDa subunit, mitochondrial (33 aa).

It localises to the mitochondrion. The protein localises to the mitochondrion inner membrane. Mitochondrial membrane ATP synthase (F(1)F(0) ATP synthase or Complex V) produces ATP from ADP in the presence of a proton gradient across the membrane which is generated by electron transport complexes of the respiratory chain. F-type ATPases consist of two structural domains, F(1) - containing the extramembraneous catalytic core and F(0) - containing the membrane proton channel, linked together by a central stalk and a peripheral stalk. During catalysis, ATP synthesis in the catalytic domain of F(1) is coupled via a rotary mechanism of the central stalk subunits to proton translocation. Part of the complex F(0) domain. In Solanum tuberosum (Potato), this protein is ATP synthase 27 kDa subunit, mitochondrial.